The following is a 181-amino-acid chain: ATP synthase subunit b 2 (181 aa).

Positions 1-18 are enriched in low complexity; it reads MATTTHDAGHGAAEAAHG. A disordered region spans residues 1-20; that stretch reads MATTTHDAGHGAAEAAHGSS. Residues 34-54 traverse the membrane as a helical segment; the sequence is IFWLLVTLVVIYLILSRIALP.

This sequence belongs to the ATPase B chain family. As to quaternary structure, F-type ATPases have 2 components, F(1) - the catalytic core - and F(0) - the membrane proton channel. F(1) has five subunits: alpha(3), beta(3), gamma(1), delta(1), epsilon(1). F(0) has three main subunits: a(1), b(2) and c(10-14). The alpha and beta chains form an alternating ring which encloses part of the gamma chain. F(1) is attached to F(0) by a central stalk formed by the gamma and epsilon chains, while a peripheral stalk is formed by the delta and b chains.

The protein localises to the cell inner membrane. Functionally, f(1)F(0) ATP synthase produces ATP from ADP in the presence of a proton or sodium gradient. F-type ATPases consist of two structural domains, F(1) containing the extramembraneous catalytic core and F(0) containing the membrane proton channel, linked together by a central stalk and a peripheral stalk. During catalysis, ATP synthesis in the catalytic domain of F(1) is coupled via a rotary mechanism of the central stalk subunits to proton translocation. In terms of biological role, component of the F(0) channel, it forms part of the peripheral stalk, linking F(1) to F(0). The b'-subunit is a diverged and duplicated form of b found in plants and photosynthetic bacteria. This is ATP synthase subunit b 2 (atpF2) from Ruegeria sp. (strain TM1040) (Silicibacter sp.).